A 130-amino-acid polypeptide reads, in one-letter code: RutC family protein HI_0719 (130 aa).

The active site involves cysteine 109.

The protein belongs to the RutC family. As to quaternary structure, homotrimer.

This is RutC family protein HI_0719 from Haemophilus influenzae (strain ATCC 51907 / DSM 11121 / KW20 / Rd).